Consider the following 434-residue polypeptide: Zinc carboxypeptidase (434 aa).

A signal peptide spans Met-1–Ala-33. A propeptide spans Lys-34–Gln-114 (activation peptide). The Peptidase M14 domain occupies Gly-122–Ser-423. Positions 183 and 186 each coordinate Zn(2+). Residues Gly-270–His-295 form a disordered region. Over residues Ala-282–His-293 the composition is skewed to basic residues. His-315 is a binding site for Zn(2+). Glu-388 serves as the catalytic Proton donor/acceptor.

This sequence belongs to the peptidase M14 family. Requires Zn(2+) as cofactor.

The enzyme catalyses Releases a C-terminal residue, which may be hydrophobic or positively charged.. Carboxypeptidase that possesses the specificities of both mammalian Cpase A and B. Thus shows broad substrate specificity, being able to cleave Cbz-Gly-Leu, Cbz-Gly-Val, Cbz-Gly-Phe, Cbz-Gly-Lys and Bz-Gly-Arg in vitro. This is Zinc carboxypeptidase from Saccharothrix mutabilis subsp. capreolus (Streptomyces capreolus).